A 476-amino-acid polypeptide reads, in one-letter code: Adenylyl cyclase-associated protein 2 (476 aa).

A disordered region spans residues 223–322 (SILSSGPGLP…KSNSPQKHTP (100 aa)). Over residues 230-247 (GLPPPPPPPPPPGPPPPF) the composition is skewed to pro residues. Over residues 288–299 (KNPSLRAQGQIR) the composition is skewed to polar residues. S300 and S308 each carry phosphoserine. The segment covering 300–317 (SPTKTHTPSPTSPKSNSP) has biased composition (low complexity). One can recognise a C-CAP/cofactor C-like domain in the interval 317–454 (PQKHTPVLEL…QDDDYREFPI (138 aa)).

This sequence belongs to the CAP family. Expressed in the heart, skeletal muscle, and brain.

Its subcellular location is the cell membrane. Functionally, involved in the regulation of actin polymerization. This is Adenylyl cyclase-associated protein 2 (Cap2) from Mus musculus (Mouse).